A 210-amino-acid chain; its full sequence is Phosphate propanoyltransferase (210 aa).

26 to 28 (ISN) is a binding site for CoA. The Zn(2+) site is built by His30 and His32. 2 residues coordinate CoA: Lys71 and Arg78. Arg84 contributes to the phosphate binding site. Residues Glu90, His138, His140, and His186 each contribute to the Zn(2+) site. Asn193 is a binding site for CoA.

It belongs to the PduL family. Zn(2+) serves as cofactor.

The protein localises to the bacterial microcompartment. It carries out the reaction propanoyl-CoA + phosphate = propanoyl phosphate + CoA. It functions in the pathway polyol metabolism; 1,2-propanediol degradation. Functionally, involved in 1,2-propanediol (1,2-PD) utilization within the bacterial microcompartment (BMC) dedicated to 1,2-PD degradation by catalyzing the conversion of propanoyl-CoA to propanoyl-phosphate. Required for optimal growth on 1,2-PD. CoA is regenerated within the BMC (for use by PduP) via this enzyme, although there must also be cofactor transport across the BMC. Directly targeted to the BMC. Expression of a cosmid containing the full 21-gene pdu operon in E.coli allows E.coli to grow on 1,2-propanediol (1,2-PD) with the appearance of bacterial microcompartments (BMC) in its cytoplasm. Its function is as follows. The 1,2-PD-specific bacterial microcompartment (BMC) concentrates low levels of 1,2-PD catabolic enzymes, concentrates volatile reaction intermediates thus enhancing pathway flux and keeps the level of toxic, mutagenic propionaldehyde low. The protein is Phosphate propanoyltransferase of Citrobacter freundii.